The following is a 335-amino-acid chain: Olfactory receptor 9K2 (335 aa).

Residues 1-50 (MLGSKPRVHLYILPCASQQVSTMGDRGTSNHSEMTDFILAGFRVRPELHI) are Extracellular-facing. An N-linked (GlcNAc...) asparagine glycan is attached at Asn-30. A helical transmembrane segment spans residues 51–71 (LLFLLFLFVYAMILLGNVGMM). Residues 72 to 79 (TIIMTDPR) lie on the Cytoplasmic side of the membrane. A helical membrane pass occupies residues 80 to 100 (LNTPMYFFLGNLSFIDLFYSS). Residues 101–124 (VIEPKAMINFWSENKSISFAGCVA) lie on the Extracellular side of the membrane. Asn-114 is a glycosylation site (N-linked (GlcNAc...) asparagine). Residues Cys-122 and Cys-214 are joined by a disulfide bond. The chain crosses the membrane as a helical span at residues 125-145 (QLFLFALLIVTEGFLLAAMAY). Topologically, residues 146 to 164 (DRFIAICNPLLYSVQMSTR) are cytoplasmic. Residues 165–185 (LCTQLVAGSYFCGCISSVIQT) traverse the membrane as a helical segment. Residues 186–222 (SMTFTLSFCASRAVDHFYCDSRPLQRLSCSDLFIHRM) are Extracellular-facing. Residues 223-242 (ISFSLSCIIILPTIIVIIVS) traverse the membrane as a helical segment. Topologically, residues 243-262 (YMYIVSTVLKIHSTEGHKKA) are cytoplasmic. A helical membrane pass occupies residues 263-283 (FSTCSSHLGVVSVLYGAVFFM). Residues 284–296 (YLTPDRFPELSKV) lie on the Extracellular side of the membrane. At 316-335 (RNKDVQEALKKFLEKKNIIL) the chain is on the cytoplasmic side.

It belongs to the G-protein coupled receptor 1 family.

It localises to the cell membrane. Functionally, odorant receptor. This Homo sapiens (Human) protein is Olfactory receptor 9K2 (OR9K2).